Consider the following 103-residue polypeptide: Large ribosomal subunit protein bL21 (103 aa).

The protein belongs to the bacterial ribosomal protein bL21 family. As to quaternary structure, part of the 50S ribosomal subunit. Contacts protein L20.

In terms of biological role, this protein binds to 23S rRNA in the presence of protein L20. The protein is Large ribosomal subunit protein bL21 of Shewanella amazonensis (strain ATCC BAA-1098 / SB2B).